Here is a 161-residue protein sequence, read N- to C-terminus: Assembly protein P7 (161 aa).

In terms of assembly, homodimer. Part of the packaging complex composed of RDRP, P4 and P7. Interacts with RDRP.

It is found in the virion. In terms of biological role, assembly protein part of the packaging complex that packages the viral RNA segments, replicate them into a double-stranded form and transcribe them. Required for efficient procapsid assembly. Necessary for stable packaging. May stabilize the RNA-dependent RNA polymerase (RdRP) in its position at the three-fold axis on the inner side of empty-unexpanded procapsids. Could play a role in viral RNA recognition. Seems to be involved in the regulation of plus strand synthesis (transcription) as a fidelity factor. In Pseudomonas phage phi6 (Bacteriophage phi-6), this protein is Assembly protein P7 (P7).